An 84-amino-acid chain; its full sequence is Small ribosomal subunit protein uS17 (84 aa).

It belongs to the universal ribosomal protein uS17 family. Part of the 30S ribosomal subunit.

Functionally, one of the primary rRNA binding proteins, it binds specifically to the 5'-end of 16S ribosomal RNA. The polypeptide is Small ribosomal subunit protein uS17 (Serratia proteamaculans (strain 568)).